Reading from the N-terminus, the 146-residue chain is MKLHELKPAEGSRKVRNRVGRGTSSGNGKTSGRGQKGQKARSGGGVRLGFEGGQTPLFRRLPKRGFTNINAKEYAIVNLDQLNVFEDGAEVTPVVLIEAGIVKAEKSGIKILGNGELTKKLTVKAAKFSKSAEEAITAKGGSVEVI.

Residues 1-13 (MKLHELKPAEGSR) are compositionally biased toward basic and acidic residues. The tract at residues 1–51 (MKLHELKPAEGSRKVRNRVGRGTSSGNGKTSGRGQKGQKARSGGGVRLGFE) is disordered. Gly residues-rich tracts occupy residues 23–35 (TSSG…GRGQ) and 42–51 (SGGGVRLGFE).

It belongs to the universal ribosomal protein uL15 family. Part of the 50S ribosomal subunit.

Its function is as follows. Binds to the 23S rRNA. The sequence is that of Large ribosomal subunit protein uL15 from Streptococcus pneumoniae serotype 2 (strain D39 / NCTC 7466).